A 116-amino-acid chain; its full sequence is Aspartate 1-decarboxylase (116 aa).

The Schiff-base intermediate with substrate; via pyruvic acid role is filled by serine 25. Residue serine 25 is modified to Pyruvic acid (Ser). Substrate is bound at residue threonine 57. The active-site Proton donor is tyrosine 58. 73 to 75 (GAA) contributes to the substrate binding site.

This sequence belongs to the PanD family. As to quaternary structure, heterooctamer of four alpha and four beta subunits. The cofactor is pyruvate. Post-translationally, is synthesized initially as an inactive proenzyme, which is activated by self-cleavage at a specific serine bond to produce a beta-subunit with a hydroxyl group at its C-terminus and an alpha-subunit with a pyruvoyl group at its N-terminus.

It is found in the cytoplasm. The catalysed reaction is L-aspartate + H(+) = beta-alanine + CO2. It functions in the pathway cofactor biosynthesis; (R)-pantothenate biosynthesis; beta-alanine from L-aspartate: step 1/1. Its function is as follows. Catalyzes the pyruvoyl-dependent decarboxylation of aspartate to produce beta-alanine. The polypeptide is Aspartate 1-decarboxylase (Parabacteroides distasonis (strain ATCC 8503 / DSM 20701 / CIP 104284 / JCM 5825 / NCTC 11152)).